Here is a 175-residue protein sequence, read N- to C-terminus: Pathogenesis-related protein 1A1 (175 aa).

A signal peptide spans 1 to 21 (MKSSIFVACFITFIIFHSSQA). One can recognise an SCP domain in the interval 29–146 (LNAHNAARRR…SGWVFITCNY (118 aa)). 3 disulfide bridges follow: Cys65–Cys135, Cys108–Cys114, and Cys130–Cys144.

This sequence belongs to the CRISP family.

Its function is as follows. Probably involved in the defense reaction of plants against pathogens. The chain is Pathogenesis-related protein 1A1 from Solanum lycopersicum (Tomato).